The sequence spans 251 residues: Small ribosomal subunit protein uS2 (251 aa).

Belongs to the universal ribosomal protein uS2 family.

This chain is Small ribosomal subunit protein uS2, found in Chlorobium chlorochromatii (strain CaD3).